The sequence spans 347 residues: Probable tRNA N6-adenosine threonylcarbamoyltransferase (347 aa).

Residues histidine 109, histidine 113, and tyrosine 130 each contribute to the a divalent metal cation site. Substrate is bound by residues 130–134 (YVSGG), aspartate 162, glycine 177, glutamate 181, and asparagine 277. Aspartate 305 contacts a divalent metal cation.

Belongs to the KAE1 / TsaD family. In terms of assembly, component of the EKC/KEOPS complex; the whole complex dimerizes. A divalent metal cation is required as a cofactor.

The protein resides in the cytoplasm. The protein localises to the nucleus. The enzyme catalyses L-threonylcarbamoyladenylate + adenosine(37) in tRNA = N(6)-L-threonylcarbamoyladenosine(37) in tRNA + AMP + H(+). Its function is as follows. Component of the EKC/KEOPS complex that is required for the formation of a threonylcarbamoyl group on adenosine at position 37 (t(6)A37) in tRNAs that read codons beginning with adenine. The complex is probably involved in the transfer of the threonylcarbamoyl moiety of threonylcarbamoyl-AMP (TC-AMP) to the N6 group of A37. Likely plays a direct catalytic role in this reaction, but requires other protein(s) of the complex to fulfill this activity. The protein is Probable tRNA N6-adenosine threonylcarbamoyltransferase of Drosophila melanogaster (Fruit fly).